Reading from the N-terminus, the 607-residue chain is Elongation factor 4 (607 aa).

Residues S11–A193 enclose the tr-type G domain. Residues D23–T28 and N140–D143 contribute to the GTP site.

It belongs to the TRAFAC class translation factor GTPase superfamily. Classic translation factor GTPase family. LepA subfamily.

It is found in the cell membrane. The enzyme catalyses GTP + H2O = GDP + phosphate + H(+). In terms of biological role, required for accurate and efficient protein synthesis under certain stress conditions. May act as a fidelity factor of the translation reaction, by catalyzing a one-codon backward translocation of tRNAs on improperly translocated ribosomes. Back-translocation proceeds from a post-translocation (POST) complex to a pre-translocation (PRE) complex, thus giving elongation factor G a second chance to translocate the tRNAs correctly. Binds to ribosomes in a GTP-dependent manner. This is Elongation factor 4 from Bacillus cereus (strain B4264).